The sequence spans 556 residues: MRSDAVKKGVERAPHRSLLYALGLTDEELKRPIIGVANSKNEIIPGHIHLDKIAEAVKAGIRMAGGTPVEFSTIGVCDGIAMGHGGMKYSLGSREVIADSIEIMAMAHGFDGIVLIPNCDKIVPGMLMAAARLDIPAIVVSGGPMLAGICDGTTCDLSTVFEAVGALKAGKITEEEFYSIERNACPTCGSCSGMFTANTMNCLTEALGLGLPGNGTIPAVYSERIRLAKEAGMKIVELVERNITPSQILTKEAFVNAFSLDMALGGSTNTVLHLKAIAHEAGVDIPLEEINDISDRVPNLCKLSPAGKYHIEDLHFAGGVSAVLKELSKAGLLHLDALTVTGRTLGENIKDAKVRNRDVIRTIEDPYSKTGGIAILFGNIAREGAVVKASAVSPEMLRHEGPARVFDSEEEAIEAIYGGKIQKGDVVVIRYEGPKGGPGMREMLSPTSALAGMGLDKDVALITDGRFSGATRGASIGHVSPEAMEGGEIAIIEDGDIIEIDIPARKINVKLSDEEIKKRMANWKRPEPKIKKGYMARYTREVTSGSKGAVFREGGV.

Position 78 (Asp-78) interacts with Mg(2+). Cys-119 contributes to the [2Fe-2S] cluster binding site. 2 residues coordinate Mg(2+): Asp-120 and Lys-121. At Lys-121 the chain carries N6-carboxylysine. Cys-191 is a [2Fe-2S] cluster binding site. Position 442 (Glu-442) interacts with Mg(2+). Ser-468 acts as the Proton acceptor in catalysis.

This sequence belongs to the IlvD/Edd family. As to quaternary structure, homodimer. [2Fe-2S] cluster serves as cofactor. Mg(2+) is required as a cofactor.

It carries out the reaction (2R)-2,3-dihydroxy-3-methylbutanoate = 3-methyl-2-oxobutanoate + H2O. The catalysed reaction is (2R,3R)-2,3-dihydroxy-3-methylpentanoate = (S)-3-methyl-2-oxopentanoate + H2O. Its pathway is amino-acid biosynthesis; L-isoleucine biosynthesis; L-isoleucine from 2-oxobutanoate: step 3/4. The protein operates within amino-acid biosynthesis; L-valine biosynthesis; L-valine from pyruvate: step 3/4. Functionally, functions in the biosynthesis of branched-chain amino acids. Catalyzes the dehydration of (2R,3R)-2,3-dihydroxy-3-methylpentanoate (2,3-dihydroxy-3-methylvalerate) into 2-oxo-3-methylpentanoate (2-oxo-3-methylvalerate) and of (2R)-2,3-dihydroxy-3-methylbutanoate (2,3-dihydroxyisovalerate) into 2-oxo-3-methylbutanoate (2-oxoisovalerate), the penultimate precursor to L-isoleucine and L-valine, respectively. The polypeptide is Dihydroxy-acid dehydratase (Caldanaerobacter subterraneus subsp. tengcongensis (strain DSM 15242 / JCM 11007 / NBRC 100824 / MB4) (Thermoanaerobacter tengcongensis)).